A 164-amino-acid polypeptide reads, in one-letter code: Putative protein ZNF321 (164 aa).

The protein is Putative protein ZNF321 (ZNF321P) of Homo sapiens (Human).